The following is a 291-amino-acid chain: 3-hydroxy-5-phosphonooxypentane-2,4-dione thiolase (291 aa).

The active-site Schiff-base intermediate with substrate is K203.

It belongs to the DeoC/FbaB aldolase family. In terms of assembly, homodecamer.

It is found in the cytoplasm. The catalysed reaction is dihydroxyacetone phosphate + acetyl-CoA = 3-hydroxy-2,4-dioxopentyl phosphate + CoA. Involved in the degradation of phospho-AI-2, thereby terminating induction of the lsr operon and closing the AI-2 signaling cycle. Catalyzes the transfer of an acetyl moiety from 3-hydroxy-5-phosphonooxypentane-2,4-dione to CoA to form glycerone phosphate and acetyl-CoA. In Yersinia pestis bv. Antiqua (strain Antiqua), this protein is 3-hydroxy-5-phosphonooxypentane-2,4-dione thiolase.